We begin with the raw amino-acid sequence, 288 residues long: Bifunctional protein FolD (288 aa).

NADP(+) contacts are provided by residues 164–166 and isoleucine 230; that span reads GTS.

This sequence belongs to the tetrahydrofolate dehydrogenase/cyclohydrolase family. Homodimer.

The catalysed reaction is (6R)-5,10-methylene-5,6,7,8-tetrahydrofolate + NADP(+) = (6R)-5,10-methenyltetrahydrofolate + NADPH. It carries out the reaction (6R)-5,10-methenyltetrahydrofolate + H2O = (6R)-10-formyltetrahydrofolate + H(+). It functions in the pathway one-carbon metabolism; tetrahydrofolate interconversion. Its function is as follows. Catalyzes the oxidation of 5,10-methylenetetrahydrofolate to 5,10-methenyltetrahydrofolate and then the hydrolysis of 5,10-methenyltetrahydrofolate to 10-formyltetrahydrofolate. This chain is Bifunctional protein FolD, found in Mycoplasma mycoides subsp. mycoides SC (strain CCUG 32753 / NCTC 10114 / PG1).